The sequence spans 120 residues: Immunoglobulin kappa variable 2D-28 (120 aa).

Residues 1–19 form the signal peptide; it reads MRLPAQLLGLLMLWVSGSS. One can recognise an Ig-like domain in the interval 20–120; sequence GDIVMTQSPL…YYCMQALQTP (101 aa). The interval 21 to 43 is framework-1; the sequence is DIVMTQSPLSLPVTPGEPASISC. Cysteine 43 and cysteine 113 are disulfide-bonded. Residues 44–59 are complementarity-determining-1; it reads RSSQSLLHSNGYNYLD. Residues 60–74 form a framework-2 region; sequence WYLQKPGQSPQLLIY. Positions 75 to 81 are complementarity-determining-2; that stretch reads LGSNRAS. The framework-3 stretch occupies residues 82 to 113; that stretch reads GVPDRFSGSGSGTDFTLKISRVEAEDVGVYYC. A complementarity-determining-3 region spans residues 114–120; that stretch reads MQALQTP.

In terms of assembly, immunoglobulins are composed of two identical heavy chains and two identical light chains; disulfide-linked.

The protein resides in the secreted. Its subcellular location is the cell membrane. V region of the variable domain of immunoglobulin light chains that participates in the antigen recognition. Immunoglobulins, also known as antibodies, are membrane-bound or secreted glycoproteins produced by B lymphocytes. In the recognition phase of humoral immunity, the membrane-bound immunoglobulins serve as receptors which, upon binding of a specific antigen, trigger the clonal expansion and differentiation of B lymphocytes into immunoglobulins-secreting plasma cells. Secreted immunoglobulins mediate the effector phase of humoral immunity, which results in the elimination of bound antigens. The antigen binding site is formed by the variable domain of one heavy chain, together with that of its associated light chain. Thus, each immunoglobulin has two antigen binding sites with remarkable affinity for a particular antigen. The variable domains are assembled by a process called V-(D)-J rearrangement and can then be subjected to somatic hypermutations which, after exposure to antigen and selection, allow affinity maturation for a particular antigen. The polypeptide is Immunoglobulin kappa variable 2D-28 (Homo sapiens (Human)).